We begin with the raw amino-acid sequence, 483 residues long: Aspartyl/glutamyl-tRNA(Asn/Gln) amidotransferase subunit B (483 aa).

This sequence belongs to the GatB/GatE family. GatB subfamily. Heterotrimer of A, B and C subunits.

It carries out the reaction L-glutamyl-tRNA(Gln) + L-glutamine + ATP + H2O = L-glutaminyl-tRNA(Gln) + L-glutamate + ADP + phosphate + H(+). The enzyme catalyses L-aspartyl-tRNA(Asn) + L-glutamine + ATP + H2O = L-asparaginyl-tRNA(Asn) + L-glutamate + ADP + phosphate + 2 H(+). Its function is as follows. Allows the formation of correctly charged Asn-tRNA(Asn) or Gln-tRNA(Gln) through the transamidation of misacylated Asp-tRNA(Asn) or Glu-tRNA(Gln) in organisms which lack either or both of asparaginyl-tRNA or glutaminyl-tRNA synthetases. The reaction takes place in the presence of glutamine and ATP through an activated phospho-Asp-tRNA(Asn) or phospho-Glu-tRNA(Gln). The sequence is that of Aspartyl/glutamyl-tRNA(Asn/Gln) amidotransferase subunit B from Anaplasma phagocytophilum (strain HZ).